The chain runs to 400 residues: Large envelope protein (400 aa).

At methionine 1 the chain carries N-acetylmethionine. The N-myristoyl glycine; by host moiety is linked to residue glycine 2. A pre-S1 region spans residues 2–119; that stretch reads GAPLSTARRG…PPLRDTHPQA (118 aa). The pre-S stretch occupies residues 2 to 174; that stretch reads GAPLSTARRG…FSKTGDPAMN (173 aa). Residues 2–181 lie on the Virion surface; in external conformation side of the membrane; that stretch reads GAPLSTARRG…AMNMENITSG (180 aa). The Intravirion; in internal conformation segment spans residues 2-253; that stretch reads GAPLSTARRG…PGYRWMCLRR (252 aa). Proline 4 carries an N-linked (GlcNAc...) asparagine glycan. The tract at residues 70–115 is disordered; the sequence is PHGGLLGWSPQAQGILTTSPPDPPPASTNRRSGRKPTPVSPPLRDT. The span at 79 to 88 shows a compositional bias: polar residues; it reads PQAQGILTTS. Positions 120–174 are pre-S2; that stretch reads MQWNSTQFHQALLDPRVRGLYLPAGGSSSETQNPVPTIASLTSSIFSKTGDPAMN. Residues 182-202 traverse the membrane as a helical segment; the sequence is LLGPLLVLQAVCFLLTKILTI. The Intravirion; in external conformation segment spans residues 203-253; the sequence is PQSLDSWWTSLNFLGVPPGCPGQNSQSPISNHLPTSCPPTCPGYRWMCLRR. Residues 254-274 traverse the membrane as a helical segment; that stretch reads FIIFLFILLLCLIFLLVLLDY. Residues 275–348 are Virion surface-facing; the sequence is QGMLPVCPLL…WASARFSWLS (74 aa). Asparagine 320 carries N-linked (GlcNAc...) asparagine; by host glycosylation. The chain crosses the membrane as a helical span at residues 349–369; that stretch reads LLVQFVQWCVGLSPTVWLLVI. The Intravirion portion of the chain corresponds to 370–375; the sequence is WMIWYW. A helical membrane pass occupies residues 376–398; it reads GPNLCSILSPFIPLLPIFCYLWA. The Virion surface portion of the chain corresponds to 399–400; sequence SI.

It belongs to the orthohepadnavirus major surface antigen family. In its internal form (Li-HBsAg), interacts with the capsid protein and with the isoform S. Interacts with host chaperone CANX. As to quaternary structure, associates with host chaperone CANX through its pre-S2 N glycan; this association may be essential for isoform M proper secretion. In terms of assembly, interacts with isoform L. Interacts with the antigens of satellite virus HDV (HDVAgs); this interaction is required for encapsidation of HDV genomic RNA. Isoform M is N-terminally acetylated by host at a ratio of 90%, and N-glycosylated by host at the pre-S2 region. Post-translationally, myristoylated.

Its subcellular location is the virion membrane. The large envelope protein exists in two topological conformations, one which is termed 'external' or Le-HBsAg and the other 'internal' or Li-HBsAg. In its external conformation the protein attaches the virus to cell receptors and thereby initiating infection. This interaction determines the species specificity and liver tropism. This attachment induces virion internalization predominantly through caveolin-mediated endocytosis. The large envelope protein also assures fusion between virion membrane and endosomal membrane. In its internal conformation the protein plays a role in virion morphogenesis and mediates the contact with the nucleocapsid like a matrix protein. Functionally, the middle envelope protein plays an important role in the budding of the virion. It is involved in the induction of budding in a nucleocapsid independent way. In this process the majority of envelope proteins bud to form subviral lipoprotein particles of 22 nm of diameter that do not contain a nucleocapsid. This is Large envelope protein from Hepatitis B virus genotype H subtype adw4 (isolate Nicaragua/2928Nic/1997) (HBV-H).